A 154-amino-acid chain; its full sequence is Hemiasterlin resistant protein 1 (154 aa).

2 disordered regions span residues 1 to 64 (MVRR…PGLM) and 86 to 109 (GMFT…PAGA). Low complexity-rich tracts occupy residues 7–28 (ASPS…SSFA), 48–57 (TPMGAPMGAP), and 96–109 (AEQA…PAGA). The 39-residue stretch at 116–154 (SQPCEFEWRQFVDCAQNQSDVSLCNGFNDIFKQCKARYA) folds into the CHCH domain. 2 short sequence motifs (cx9C motif) span residues 119 to 129 (CEFEWRQFVDC) and 139 to 149 (CNGFNDIFKQC). Cystine bridges form between Cys119–Cys149 and Cys129–Cys139.

The polypeptide is Hemiasterlin resistant protein 1 (har-1) (Caenorhabditis elegans).